The following is a 197-amino-acid chain: Lactoylglutathione lyase-like protein terB (197 aa).

The N-terminal stretch at 1 to 19 (MARFAVLQLLLPLAAGLTG) is a signal peptide. N-linked (GlcNAc...) asparagine glycans are attached at residues asparagine 82, asparagine 99, and asparagine 140.

It belongs to the glyoxalase I family.

Its function is as follows. Lactoylglutathione lyase-like protein; part of the gene cluster that mediates the biosynthesis of terrein, a fungal metabolite with ecological, antimicrobial, antiproliferative, and antioxidative activities. The first step in the pathway is performed by the polyketide synthase terA that produces 4-hydroxy-6-methylpyranon (4-HMP), orsellinic acid (OA), and 2,3-dehydro-6-hydroxymellein (2,3-dehydro-6-HM) by condensing acetyl-CoA with two, three, or four malonyl-CoA units, respectively. 4-HMP and OA are not pathway intermediates, but are rather shunt or side products. 2,3-dehydro-6-HM is further converted to 6-hydroxymellein (6-HM) by the 6-hydroxymellein synthase terB. The monooxygenases terC and terD, the multicopper oxidase terE and the Kelch-like protein terF are then involved in the transformation of 6-HM to terrein. Even if they are co-regulated with the other terrein cluster genes, terH and terI seem to be dispensable for terrein production; whereas one or both of the 2 transporters terG and terJ are probably required for efficient secretion of metabolites. This Aspergillus terreus (strain NIH 2624 / FGSC A1156) protein is Lactoylglutathione lyase-like protein terB.